The following is a 362-amino-acid chain: Type-1 angiotensin II receptor A (362 aa).

The Extracellular segment spans residues 1–26 (MSNASTVETSDVERIAVNCSKSGMHN). 2 N-linked (GlcNAc...) asparagine glycosylation sites follow: asparagine 3 and asparagine 18. 2 disulfides stabilise this stretch: cysteine 19-cysteine 273 and cysteine 102-cysteine 181. The helical transmembrane segment at 27–56 (YIFIAIPIIYSTIFVVGVFGNSMVVIVIYS) threads the bilayer. The Cytoplasmic segment spans residues 57–62 (YMKMKT). The chain crosses the membrane as a helical span at residues 63-90 (VASIFLMNLALSDLCFVITLPLWAAYTA). Residues 91 to 99 (MHYHWPFGN) lie on the Extracellular side of the membrane. A helical transmembrane segment spans residues 100–126 (FLCKVASTAITLNLYTTVFLLTCLSID). The Cytoplasmic segment spans residues 127-142 (RYSAIVHPMKSRIWRT). A helical transmembrane segment spans residues 143-166 (AMVARLTCVGIWLVAFLASMPSII). Residues 167–191 (YRQIYLFHDTNQTVCAIVYDSGHIY) are Extracellular-facing. Residue arginine 168 participates in angiotensin II binding. N-linked (GlcNAc...) asparagine glycosylation is present at asparagine 177. Tyrosine 185 and lysine 200 together coordinate angiotensin II. A helical transmembrane segment spans residues 192-217 (FMVGMSLAKNIVGFLIPFLIILTSYT). At 218–238 (LIGKTLKEVYRAQRARNDDIF) the chain is on the cytoplasmic side. Residues 239–267 (KMIVAVVLLFFFCWIPYQVFTFLDVLIQM) traverse the membrane as a helical segment. Residues 268–277 (DVIQNCKMYD) lie on the Extracellular side of the membrane. A helical transmembrane segment spans residues 278 to 303 (IVDTGMPITICIAYFNSCLNPFLYGF). Over 304–362 (FGKNFRKHFLQLIKYIPPKMRTHASVNTKSSLVSSSLSDTKRASKKIALQMTDNEEHCK) the chain is Cytoplasmic. Cysteine 361 carries the S-palmitoyl cysteine lipid modification.

This sequence belongs to the G-protein coupled receptor 1 family. Post-translationally, C-terminal Ser or Thr residues may be phosphorylated. In terms of tissue distribution, expressed in lung, liver, kidney, and spleen, with highest expression in the heart.

It is found in the cell membrane. Its function is as follows. Receptor for angiotensin II, a vasoconstricting peptide, which acts as a key regulator of blood pressure and sodium retention by the kidney. The activated receptor in turn couples to G-alpha proteins G(q) (GNAQ, GNA11, GNA14 or GNA15) and thus activates phospholipase C and increases the cytosolic Ca(2+) concentrations, which in turn triggers cellular responses such as stimulation of protein kinase C. This Xenopus laevis (African clawed frog) protein is Type-1 angiotensin II receptor A (agtr1-a).